Consider the following 264-residue polypeptide: Myozenin-2 (264 aa).

Omega-N-methylarginine is present on R53. The disordered stretch occupies residues 90 to 135 (GKVDGSNLEGGSQQAPLTPPNTPDPRSPPNPDNIAPGYSGPLKEIP). S101 carries the post-translational modification Phosphoserine. Residues 106–120 (LTPPNTPDPRSPPNP) show a composition bias toward pro residues. T107 and T111 each carry phosphothreonine. S116 bears the Phosphoserine mark.

The protein belongs to the myozenin family. As to quaternary structure, interacts via its C-terminus with spectrin repeats 3 and 4 of ACTN2. Interacts with ACTN1, LDB3, MYOT and PPP3CA.

Its subcellular location is the cytoplasm. It is found in the myofibril. It localises to the sarcomere. The protein resides in the z line. Myozenins may serve as intracellular binding proteins involved in linking Z line proteins such as alpha-actinin, gamma-filamin, TCAP/telethonin, LDB3/ZASP and localizing calcineurin signaling to the sarcomere. Plays an important role in the modulation of calcineurin signaling. May play a role in myofibrillogenesis. In Pongo abelii (Sumatran orangutan), this protein is Myozenin-2 (MYOZ2).